We begin with the raw amino-acid sequence, 490 residues long: Bifunctional protein HldE (490 aa).

The tract at residues 1-330 (MERKNVESLF…GSLGFQHGEG (330 aa)) is ribokinase. Residue 205–208 (NRKE) participates in ATP binding. Asp275 is a catalytic residue. The interval 356–490 (FTNGCFDLLH…EKILKAYGEE (135 aa)) is cytidylyltransferase.

It in the N-terminal section; belongs to the carbohydrate kinase PfkB family. This sequence in the C-terminal section; belongs to the cytidylyltransferase family. As to quaternary structure, homodimer.

The catalysed reaction is D-glycero-beta-D-manno-heptose 7-phosphate + ATP = D-glycero-beta-D-manno-heptose 1,7-bisphosphate + ADP + H(+). It carries out the reaction D-glycero-beta-D-manno-heptose 1-phosphate + ATP + H(+) = ADP-D-glycero-beta-D-manno-heptose + diphosphate. It participates in nucleotide-sugar biosynthesis; ADP-L-glycero-beta-D-manno-heptose biosynthesis; ADP-L-glycero-beta-D-manno-heptose from D-glycero-beta-D-manno-heptose 7-phosphate: step 1/4. Its pathway is nucleotide-sugar biosynthesis; ADP-L-glycero-beta-D-manno-heptose biosynthesis; ADP-L-glycero-beta-D-manno-heptose from D-glycero-beta-D-manno-heptose 7-phosphate: step 3/4. In terms of biological role, catalyzes the phosphorylation of D-glycero-D-manno-heptose 7-phosphate at the C-1 position to selectively form D-glycero-beta-D-manno-heptose-1,7-bisphosphate. Catalyzes the ADP transfer from ATP to D-glycero-beta-D-manno-heptose 1-phosphate, yielding ADP-D-glycero-beta-D-manno-heptose. This Geobacter sulfurreducens (strain ATCC 51573 / DSM 12127 / PCA) protein is Bifunctional protein HldE.